The chain runs to 283 residues: Shikimate dehydrogenase (NADP(+)) (283 aa).

Shikimate-binding positions include 19-21 and Thr66; that span reads SLS. Lys70 acts as the Proton acceptor in catalysis. Residues Asn91 and Asp106 each coordinate shikimate. Residues 129 to 133, 153 to 158, and Leu224 each bind NADP(+); these read GAGGA and NRTPEK. Residue Tyr226 coordinates shikimate. Gly247 is a binding site for NADP(+).

Belongs to the shikimate dehydrogenase family. In terms of assembly, homodimer.

It carries out the reaction shikimate + NADP(+) = 3-dehydroshikimate + NADPH + H(+). Its pathway is metabolic intermediate biosynthesis; chorismate biosynthesis; chorismate from D-erythrose 4-phosphate and phosphoenolpyruvate: step 4/7. Its function is as follows. Involved in the biosynthesis of the chorismate, which leads to the biosynthesis of aromatic amino acids. Catalyzes the reversible NADPH linked reduction of 3-dehydroshikimate (DHSA) to yield shikimate (SA). This Methanothermobacter thermautotrophicus (strain ATCC 29096 / DSM 1053 / JCM 10044 / NBRC 100330 / Delta H) (Methanobacterium thermoautotrophicum) protein is Shikimate dehydrogenase (NADP(+)).